We begin with the raw amino-acid sequence, 241 residues long: Pyridoxine 5'-phosphate synthase (241 aa).

3-amino-2-oxopropyl phosphate is bound at residue Asn7. 9 to 10 (DH) contacts 1-deoxy-D-xylulose 5-phosphate. 3-amino-2-oxopropyl phosphate is bound at residue Arg18. His43 functions as the Proton acceptor in the catalytic mechanism. 1-deoxy-D-xylulose 5-phosphate contacts are provided by Arg45 and His50. Residue Glu70 is the Proton acceptor of the active site. Thr100 is a 1-deoxy-D-xylulose 5-phosphate binding site. His191 serves as the catalytic Proton donor. 3-amino-2-oxopropyl phosphate is bound by residues Gly192 and 213–214 (GH).

This sequence belongs to the PNP synthase family. In terms of assembly, homooctamer; tetramer of dimers.

It is found in the cytoplasm. It carries out the reaction 3-amino-2-oxopropyl phosphate + 1-deoxy-D-xylulose 5-phosphate = pyridoxine 5'-phosphate + phosphate + 2 H2O + H(+). It participates in cofactor biosynthesis; pyridoxine 5'-phosphate biosynthesis; pyridoxine 5'-phosphate from D-erythrose 4-phosphate: step 5/5. In terms of biological role, catalyzes the complicated ring closure reaction between the two acyclic compounds 1-deoxy-D-xylulose-5-phosphate (DXP) and 3-amino-2-oxopropyl phosphate (1-amino-acetone-3-phosphate or AAP) to form pyridoxine 5'-phosphate (PNP) and inorganic phosphate. The sequence is that of Pyridoxine 5'-phosphate synthase from Nostoc punctiforme (strain ATCC 29133 / PCC 73102).